Reading from the N-terminus, the 98-residue chain is DNA-directed RNA polymerase subunit omega (98 aa).

This sequence belongs to the RNA polymerase subunit omega family. The RNAP catalytic core consists of 2 alpha, 1 beta, 1 beta' and 1 omega subunit. When a sigma factor is associated with the core the holoenzyme is formed, which can initiate transcription.

It catalyses the reaction RNA(n) + a ribonucleoside 5'-triphosphate = RNA(n+1) + diphosphate. Functionally, promotes RNA polymerase assembly. Latches the N- and C-terminal regions of the beta' subunit thereby facilitating its interaction with the beta and alpha subunits. The chain is DNA-directed RNA polymerase subunit omega from Xylella fastidiosa (strain M12).